The primary structure comprises 201 residues: dTTP/UTP pyrophosphatase (201 aa).

Asp-76 serves as the catalytic Proton acceptor.

The protein belongs to the Maf family. YhdE subfamily. A divalent metal cation serves as cofactor.

It is found in the cytoplasm. The catalysed reaction is dTTP + H2O = dTMP + diphosphate + H(+). It catalyses the reaction UTP + H2O = UMP + diphosphate + H(+). Its function is as follows. Nucleoside triphosphate pyrophosphatase that hydrolyzes dTTP and UTP. May have a dual role in cell division arrest and in preventing the incorporation of modified nucleotides into cellular nucleic acids. This chain is dTTP/UTP pyrophosphatase, found in Neisseria meningitidis serogroup A / serotype 4A (strain DSM 15465 / Z2491).